The primary structure comprises 20 residues: KRTKAPFSRVVKFSIDEIRN.

The polypeptide is Unknown protein NF019 from 2D-PAGE (Naegleria fowleri (Brain eating amoeba)).